Reading from the N-terminus, the 78-residue chain is Small ribosomal subunit protein bS18 (78 aa).

It belongs to the bacterial ribosomal protein bS18 family. In terms of assembly, part of the 30S ribosomal subunit. Forms a tight heterodimer with protein bS6.

In terms of biological role, binds as a heterodimer with protein bS6 to the central domain of the 16S rRNA, where it helps stabilize the platform of the 30S subunit. The chain is Small ribosomal subunit protein bS18 from Clostridium novyi (strain NT).